We begin with the raw amino-acid sequence, 334 residues long: MAVFTPVTNAEIALWLEQYDVGTVRALRGIPSGIENTNFFLTTEKDGATHEYVVTLFERLTSEQLPFYLYLMQHLAQHGICVPAPIPGRDGAILRPLKGKPATIVTRLPGRSNLAPTTSECAIVGDMLARMHLAGRDYPRHQPNLRSLPWWNEVVPDIQPFVQGATRELLVAELAHQQRFFGSADYAALPEGPCHCDLFRDNVLFEPATDSQPERLGGFFDFYFAGVDKWLFDVAVTVNDWCVDLATGALDAERMRAMLRAYHAVRPFTDAEARHWRDMLRAAAYRFWVSRLWDFHLPRDAELLQPHDPTHFERVLRERVRAEGLTLDIPEPCN.

This sequence belongs to the pseudomonas-type ThrB family.

It catalyses the reaction L-homoserine + ATP = O-phospho-L-homoserine + ADP + H(+). Its pathway is amino-acid biosynthesis; L-threonine biosynthesis; L-threonine from L-aspartate: step 4/5. In Ralstonia nicotianae (strain ATCC BAA-1114 / GMI1000) (Ralstonia solanacearum), this protein is Homoserine kinase.